Consider the following 521-residue polypeptide: MIKQALISVSDKTGIVDFAKSLSDLGVKLLSTGGTAKLLADAGLPVTEVADYTGFPEMLDGRVKTLHPKVHGGILARRDLPEHMQALEAHDIPTIDLLVVNLYPFVATIAKDDCTLADAIENIDIGGPTMLRSAAKNHRDVTVIVDPADYAVVLDEMKANGNTVGYATNFRLATKVFAHTAQYDGAITNYLTSLTDELKHGSRNPYPATLNMAFEKVQDLRYGENPHQSAAFYRDIVTPAGALANYRQLQGKELSYNNIADSDAAWECVKTFDAPACVIIKHANPCGVAVGNDSADAYAKAFQTDPTSAFGGIIAFNREVDEAAAQAVAKQFVEVLIAPSFTDAAKQVFAAKQNVRLLEIALGEGHNAFDLKRVGGGLLVQSLDAKNVQPHELRVVTKRHPTPKEMDDLLFAWRVAKYVKSNAIVFCGNGMTLGVGAGQMSRVDSARIASIKAQNAGLTLAGSAVASDAFFPFRDGLDVVVAAGATCVIQPGGSVRDDEVIAAADEHNIAMILTGVRHFRH.

In terms of domain architecture, MGS-like spans 1 to 145; sequence MIKQALISVS…KNHRDVTVIV (145 aa).

It belongs to the PurH family.

It catalyses the reaction (6R)-10-formyltetrahydrofolate + 5-amino-1-(5-phospho-beta-D-ribosyl)imidazole-4-carboxamide = 5-formamido-1-(5-phospho-D-ribosyl)imidazole-4-carboxamide + (6S)-5,6,7,8-tetrahydrofolate. It carries out the reaction IMP + H2O = 5-formamido-1-(5-phospho-D-ribosyl)imidazole-4-carboxamide. Its pathway is purine metabolism; IMP biosynthesis via de novo pathway; 5-formamido-1-(5-phospho-D-ribosyl)imidazole-4-carboxamide from 5-amino-1-(5-phospho-D-ribosyl)imidazole-4-carboxamide (10-formyl THF route): step 1/1. It participates in purine metabolism; IMP biosynthesis via de novo pathway; IMP from 5-formamido-1-(5-phospho-D-ribosyl)imidazole-4-carboxamide: step 1/1. The polypeptide is Bifunctional purine biosynthesis protein PurH (Burkholderia multivorans (strain ATCC 17616 / 249)).